The chain runs to 483 residues: Aspartyl/glutamyl-tRNA(Asn/Gln) amidotransferase subunit B (483 aa).

Belongs to the GatB/GatE family. GatB subfamily. Heterotrimer of A, B and C subunits.

The catalysed reaction is L-glutamyl-tRNA(Gln) + L-glutamine + ATP + H2O = L-glutaminyl-tRNA(Gln) + L-glutamate + ADP + phosphate + H(+). It carries out the reaction L-aspartyl-tRNA(Asn) + L-glutamine + ATP + H2O = L-asparaginyl-tRNA(Asn) + L-glutamate + ADP + phosphate + 2 H(+). In terms of biological role, allows the formation of correctly charged Asn-tRNA(Asn) or Gln-tRNA(Gln) through the transamidation of misacylated Asp-tRNA(Asn) or Glu-tRNA(Gln) in organisms which lack either or both of asparaginyl-tRNA or glutaminyl-tRNA synthetases. The reaction takes place in the presence of glutamine and ATP through an activated phospho-Asp-tRNA(Asn) or phospho-Glu-tRNA(Gln). The protein is Aspartyl/glutamyl-tRNA(Asn/Gln) amidotransferase subunit B of Anaeromyxobacter sp. (strain Fw109-5).